Reading from the N-terminus, the 105-residue chain is Translation initiation factor 1A 2 (105 aa).

Positions 1–22 (MRKRREGSAAPSTQEVTRVRTP) are disordered. Residues 17–91 (TRVRTPRKEN…TKADVIWKYT (75 aa)) form the S1-like domain.

The protein belongs to the eIF-1A family.

In terms of biological role, seems to be required for maximal rate of protein biosynthesis. Enhances ribosome dissociation into subunits and stabilizes the binding of the initiator Met-tRNA(I) to 40 S ribosomal subunits. This is Translation initiation factor 1A 2 (eIF1A2) from Methanosarcina acetivorans (strain ATCC 35395 / DSM 2834 / JCM 12185 / C2A).